The sequence spans 175 residues: Protein tyrosine phosphatase PRL-1 (175 aa).

Residues 15 to 172 (KPSRVLFHFL…YKRRHQGAGC (158 aa)) enclose the Tyrosine-protein phosphatase domain. An intrachain disulfide couples cysteine 53 to cysteine 114. Catalysis depends on aspartate 76, which acts as the Proton donor. Residue cysteine 114 is the Phosphocysteine intermediate of the active site. A substrate-binding site is contributed by 116–120 (AGLGR). Cysteine 172 carries the cysteine methyl ester modification. A lipid anchor (S-farnesyl cysteine) is attached at cysteine 172. Positions 173 to 175 (VIM) are cleaved as a propeptide — removed in mature form.

Belongs to the protein-tyrosine phosphatase family.

It localises to the cytoplasm. The protein localises to the mitochondrion matrix. It is found in the kinetoplast. Its subcellular location is the secreted. The protein resides in the extracellular exosome. It carries out the reaction O-phospho-L-tyrosyl-[protein] + H2O = L-tyrosyl-[protein] + phosphate. With respect to regulation, activated in a reduced environment which promotes the reduction of the disulfide bond between the regulatory Cys-53 and catalytic Cys-114 residues. In terms of biological role, has protein tyrosine phosphatase activity and may act as a virulence factor to support intracellular survival in host macrophages. This is Protein tyrosine phosphatase PRL-1 from Leishmania major.